We begin with the raw amino-acid sequence, 442 residues long: O-methyltransferase pgmB (442 aa).

Aspartate 291 provides a ligand contact to S-adenosyl-L-methionine. Histidine 341 serves as the catalytic Proton acceptor.

This sequence belongs to the class I-like SAM-binding methyltransferase superfamily. Cation-independent O-methyltransferase family.

It participates in pigment biosynthesis. The protein operates within secondary metabolite biosynthesis. Its function is as follows. O-methyltransferase; part of the gene cluster that mediates the biosynthesis of pleosporalin A, ascomycone A, as well as a third cryptic naphthoquinone derived pigment, all responsible for the coloration of conidia. Specifically methylates position C-6 of the pgmA product 3-acetonyl-1,6,8-trihydroxy-2-naphthaldehyde to yield fusarubinaldehyde. The pathway begins with the biosynthesis of the cyclized heptaketide 3-acetonyl-1,6,8-trihydroxy-2-naphthaldehyde by the NR-PKS pgmA. The C-6 hydroxyl group is further methylated by the O-methyltransferase pgmB to yield fusarubinaldehyde which is in turn oxidized by the cytochrome P450 monooxygenase pgmC at C-9. The C-1 hydroxyl group is then methylated spontaneously. Although pgmE, pgmD and pgmH are essential for the production of pleosporalin A, it is not the case for the 2 other final products and it remains difficult to assign a specific function to each enzyme. PgmF and pgmG seem not to be involved in pigment biosynthesis although they were regulated by the cluster-specific transcription factor pgmR. In Aspergillus terreus, this protein is O-methyltransferase pgmB.